The primary structure comprises 333 residues: Galactinol synthase 1 (333 aa).

The active site involves Lys104. Mn(2+) is bound by residues Asp120, Asp122, and His257.

The protein belongs to the glycosyltransferase 8 family. Galactosyltransferase subfamily. Requires a divalent metal cation as cofactor. In terms of tissue distribution, expressed in source leaves, specifically in the mesophyll.

The protein localises to the cytoplasm. It catalyses the reaction myo-inositol + UDP-alpha-D-galactose = alpha-D-galactosyl-(1-&gt;3)-1D-myo-inositol + UDP + H(+). Functionally, major galactinol synthase mainly involved in the biosynthesis of storage raffinose family oligosaccharides (RFOs) that function as osmoprotectants. May promote plant stress tolerance. The sequence is that of Galactinol synthase 1 (GOLS1) from Ajuga reptans (Bugle).